A 133-amino-acid chain; its full sequence is MAEWHKIIEDISKNNKFEDAAIVDYKTTKNVLAAIPNRTFAKINPGEIIPLITNRNILKPLIGQKYCIVYTNSLMDENTYAMELLTGYAPVSPIVIARTHTALIFLMGKPTTSRRDVYRTCRDHATRVRATGN.

The protein belongs to the profilin family.

In terms of biological role, more likely to influence phosphoinositide metabolism than actin assembly. This Vaccinia virus (strain Tian Tan) (VACV) protein is Profilin.